The sequence spans 763 residues: MKKNGDGSSPKSPDGVVSRSARSSFRALSNCLKVISSGASTVARSAVSAASSAVESHHDQVLWAGFDNLQKEDGDTRRVLLLAFKSGFQVWDVEDTENVHVIVSAHDGQAFFMQMLLNPINSGVLDDRFYKSRPLLAVCGDYSSKKISSDNPGSETVATPTNVYVYSLKSQSYVHTLKFRATIYSVRCCSRIVAVLQAAQIDCFDAATLEMDYRIVTNSIVCGSLGVGYGPLAVGPRWIAYSGSRIATSSSAIFTSEIVSLSTSSPSVAQFARDSSKQLASGIANLGDKGYRSLTKYCSEVLPNPYIPGLKGIGVGNEKVADAESIGMVIVKDITNKSVITQFKAHKSPISALCFDQSGLLLVTASIQGHNINVFRIMPTISTSRAVKTTTFAHLFRLQRGFTNAVIQDICFSKDSNLIVVGSSRGTSHLFEINPEKEGDAPVPMSAISRIRSGNSSGWIGTVSGAASAAAGMVAGSVPGTVTSTFCYCDEKSNNNYYGSVADMCSKTNLLVFAPSGCMTQYALREHQVGVGHETAAMTGFDSESGLETEGKLAVDPIRRWSMIQNQSRRETHDPHSDIYGGGTSVDSKSKVFPEVVRKQSVEEAWKVSKKGTTRVVDKRHLYIYEAEQQQTHLPTQLPLWARRKFRFQELVLNRGEEISGGGGREMEIEGIQTRTIEARTRDLVPVWGYLQSPRSQQVINESIQSPSTTTQDDKVATLEGHGTETDLGAVHSEEQTQSEPVDKEGIAEEKNHSEDEDEEQVD.

WD repeat units follow at residues 345 to 385 and 402 to 441; these read AHKS…STSR and FTNA…EGDA. The segment covering 701 to 711 has biased composition (polar residues); the sequence is NESIQSPSTTT. The interval 701–763 is disordered; the sequence is NESIQSPSTT…SEDEDEEQVD (63 aa). Composition is skewed to basic and acidic residues over residues 712–725 and 741–754; these read QDDK…HGTE and PVDK…KNHS.

Belongs to the WD repeat PROPPIN family. Component of the PI(3,5)P2 regulatory complex at least composed of ATG18, SAC/FIG4, FAB1 and VAC14. In terms of tissue distribution, expressed in roots, flowers and leaves.

Its subcellular location is the preautophagosomal structure membrane. It localises to the vacuole membrane. The PI(3,5)P2 regulatory complex regulates both the synthesis and turnover of phosphatidylinositol 3,5-bisphosphate (PtdIns(3,5)P2). Required for autophagy. The sequence is that of Autophagy-related protein 18f (ATG18F) from Arabidopsis thaliana (Mouse-ear cress).